Reading from the N-terminus, the 316-residue chain is MEKALHRISSMNAALPDISLTDAAPGRRPLEWVGMQGIDLPVVVAEPGCRRDVHARADVQVDLPAPQVKGIHMSRLYGLLDGLADGEALSPAGLQRMLRAMVDSHRDCATRSARVRLRFDLLARRTALVTEGLAGWKAYPVRLDATLSGDAFALRAQVTVVYSSTCPCSAALSRHWIEQAFLTAFGHEARVEPTAVAAWLKRHATAATPHSQRSEAVVSVALPADGTTLGLLDLIDRVEQALGTPVQTAVKRADEQAFAVLNGGNLMFVEDAARRVQAALEDRHASPRVRVRHLESLHPHDAVAWAAPLREGADAC.

Belongs to the GTP cyclohydrolase IV family.

The catalysed reaction is GTP + H2O = 7,8-dihydroneopterin 3'-triphosphate + formate + H(+). It functions in the pathway cofactor biosynthesis; 7,8-dihydroneopterin triphosphate biosynthesis; 7,8-dihydroneopterin triphosphate from GTP: step 1/1. Functionally, converts GTP to 7,8-dihydroneopterin triphosphate. The polypeptide is GTP cyclohydrolase FolE2 2 (Burkholderia orbicola (strain MC0-3)).